Reading from the N-terminus, the 524-residue chain is Solute carrier family 35 member F5 (524 aa).

The disordered stretch occupies residues 1–22 (MVPPRHHPGAGRPGALSSSPPF). Positions 13–22 (PGALSSSPPF) are enriched in low complexity. The next 2 helical transmembrane spans lie at 69–89 (MALG…SSEL) and 101–121 (FFST…FIVW). Ser207 is modified (phosphoserine). The next 8 helical transmembrane spans lie at 244–264 (ISFF…EALS), 269–289 (AIVN…AAMF), 297–317 (FTLS…LVNL), 328–348 (TIGS…IVMI), 362–382 (MFFG…FFLL), 396–416 (VVLM…EFLW), 421–441 (FLTS…LSII), and 453–473 (WLFF…TLLC). In terms of domain architecture, EamA spans 253–317 (FLANFSYQEA…SIGGVVLVNL (65 aa)).

The protein belongs to the SLC35F solute transporter family.

Its subcellular location is the membrane. Its function is as follows. Putative solute transporter. This chain is Solute carrier family 35 member F5 (SLC35F5), found in Bos taurus (Bovine).